The primary structure comprises 56 residues: MAVQQNKKSRSKRGMRRSHDSLGTAQLSVDATSGELHRRHNVTADGFYRGQKVINK.

The disordered stretch occupies residues 1–40 (MAVQQNKKSRSKRGMRRSHDSLGTAQLSVDATSGELHRRH). Basic residues predominate over residues 7 to 16 (KKSRSKRGMR). The segment covering 21–31 (SLGTAQLSVDA) has biased composition (polar residues).

The protein belongs to the bacterial ribosomal protein bL32 family.

This chain is Large ribosomal subunit protein bL32, found in Shewanella halifaxensis (strain HAW-EB4).